The sequence spans 440 residues: Protein C-ets-1 (440 aa).

An N6-acetyllysine; alternate mark is found at lysine 8 and lysine 15. Residues lysine 8 and lysine 15 each participate in a glycyl lysine isopeptide (Lys-Gly) (interchain with G-Cter in SUMO2); alternate cross-link. Residue lysine 15 forms a Glycyl lysine isopeptide (Lys-Gly) (interchain with G-Cter in SUMO); alternate linkage. At threonine 38 the chain carries Phosphothreonine; by MAPK. Positions 51–136 constitute a PNT domain; it reads ATFSGFTKEQ…EHLEILQKED (86 aa). Residues 130–243 are activation domain; required for transcription activation; the sequence is EILQKEDVKP…DNMCLGRASR (114 aa). Lysine 138 participates in a covalent cross-link: Glycyl lysine isopeptide (Lys-Gly) (interchain with G-Cter in SUMO2). At tyrosine 223 the chain carries Phosphotyrosine. Residue lysine 227 forms a Glycyl lysine isopeptide (Lys-Gly) (interchain with G-Cter in SUMO) linkage. At serine 251 the chain carries Phosphoserine; by CaMK2. The residue at position 254 (serine 254) is a Phosphoserine. Threonine 265 carries the post-translational modification Phosphothreonine. Phosphoserine is present on residues serine 267 and serine 270. Residues serine 282 and serine 285 each carry the phosphoserine; by CaMK2 modification. Residues 304-312 form a helix HI-1 region; sequence FKDYVRDRA. N6-acetyllysine is present on lysine 305. Residues 323–330 form a helix HI-2 region; sequence AAALAGYT. The ETS DNA-binding region spans 335 to 415; the sequence is IQLWQFLLEL…AGKRYVYRFV (81 aa). The segment at 418–422 is helix H4; it reads LQSLL. The tract at residues 426–432 is helix H5; sequence PEELHAM.

Belongs to the ETS family. In terms of assembly, binds DNA as a homodimer; homodimerization is required for transcription activation. Interacts with MAF and MAFB. Interacts with PAX5; the interaction alters DNA-binding properties. Interacts with DAXX. Interacts with UBE2I. Interacts with SP100; the interaction is direct and modulates ETS1 transcriptional activity. Post-translationally, phosphorylation at Ser-251, Ser-282 and Ser-285 by CaMK2/CaMKII in response to calcium signaling decreases affinity for DNA: an increasing number of phosphoserines causes DNA-binding to become progressively weaker. In terms of processing, sumoylated on Lys-15 and Lys-227, preferentially with SUMO2; which inhibits transcriptional activity. Ubiquitinated; which induces proteasomal degradation.

Its subcellular location is the nucleus. It localises to the cytoplasm. Autoinhibited by a module composed of four alpha helices (HI-1, HI-2, H4, and H5) that flank the DNA-binding ETS domain, reducing the affinity for DNA. Phosphorylation by CaMK2/CaMKII in response to calcium signaling decreases affinity for DNA. Functionally, transcription factor. Directly controls the expression of cytokine and chemokine genes in a wide variety of different cellular contexts. May control the differentiation, survival and proliferation of lymphoid cells. May also regulate angiogenesis through regulation of expression of genes controlling endothelial cell migration and invasion. This chain is Protein C-ets-1 (Ets1), found in Mus musculus (Mouse).